The following is a 345-amino-acid chain: UDP-3-O-acylglucosamine N-acyltransferase (345 aa).

The Proton acceptor role is filled by histidine 241.

Belongs to the transferase hexapeptide repeat family. LpxD subfamily. In terms of assembly, homotrimer.

The catalysed reaction is a UDP-3-O-[(3R)-3-hydroxyacyl]-alpha-D-glucosamine + a (3R)-hydroxyacyl-[ACP] = a UDP-2-N,3-O-bis[(3R)-3-hydroxyacyl]-alpha-D-glucosamine + holo-[ACP] + H(+). The protein operates within bacterial outer membrane biogenesis; LPS lipid A biosynthesis. Catalyzes the N-acylation of UDP-3-O-acylglucosamine using 3-hydroxyacyl-ACP as the acyl donor. Is involved in the biosynthesis of lipid A, a phosphorylated glycolipid that anchors the lipopolysaccharide to the outer membrane of the cell. The polypeptide is UDP-3-O-acylglucosamine N-acyltransferase (Desulfotalea psychrophila (strain LSv54 / DSM 12343)).